We begin with the raw amino-acid sequence, 413 residues long: Adenylosuccinate synthetase (413 aa).

GTP-binding positions include 11–17 (GDEGKGK) and 39–41 (GHT). The Proton acceptor role is filled by D12. Mg(2+)-binding residues include D12 and G39. IMP is bound by residues 12–15 (DEGK), 37–40 (NAGH), T125, R139, Q217, T232, and R296. H40 functions as the Proton donor in the catalytic mechanism. 292-298 (TTTGRPR) provides a ligand contact to substrate. Residues R298, 324–326 (KLD), and 402–404 (STG) contribute to the GTP site.

This sequence belongs to the adenylosuccinate synthetase family. In terms of assembly, homodimer. It depends on Mg(2+) as a cofactor.

It is found in the cytoplasm. It catalyses the reaction IMP + L-aspartate + GTP = N(6)-(1,2-dicarboxyethyl)-AMP + GDP + phosphate + 2 H(+). The protein operates within purine metabolism; AMP biosynthesis via de novo pathway; AMP from IMP: step 1/2. Plays an important role in the de novo pathway of purine nucleotide biosynthesis. Catalyzes the first committed step in the biosynthesis of AMP from IMP. The sequence is that of Adenylosuccinate synthetase from Nautilia profundicola (strain ATCC BAA-1463 / DSM 18972 / AmH).